The following is a 1141-amino-acid chain: Eukaryotic translation initiation factor 3 subunit A (1141 aa).

The PCI domain maps to 319 to 501 (LQRMAAHVLL…NSIYFGTDLT (183 aa)). 2 stretches are compositionally biased toward basic and acidic residues: residues 588–623 (QNNAREEEEARRQEEESRKAKLAEQKRLEQEQEERE) and 829–899 (AAEE…RGGD). Disordered regions lie at residues 588-631 (QNNA…QNEI) and 829-1141 (AAEE…VKRR). Phosphoserine is present on S908. Composition is skewed to basic and acidic residues over residues 920 to 976 (ERND…EPDT), 990 to 1051 (SRDD…EPQR), 1059 to 1087 (DAPRHADRENRRPAGERRDRDVRETRGDQ), and 1110 to 1131 (TREEKPAAKRDQAQEKENKAGD).

Belongs to the eIF-3 subunit A family. In terms of assembly, component of the eukaryotic translation initiation factor 3 (eIF-3) complex. The eIF-3 complex interacts with pix.

It is found in the cytoplasm. RNA-binding component of the eukaryotic translation initiation factor 3 (eIF-3) complex, which is involved in protein synthesis of a specialized repertoire of mRNAs and, together with other initiation factors, stimulates binding of mRNA and methionyl-tRNAi to the 40S ribosome. The eIF-3 complex specifically targets and initiates translation of a subset of mRNAs involved in cell proliferation. The sequence is that of Eukaryotic translation initiation factor 3 subunit A from Drosophila sechellia (Fruit fly).